The following is a 195-amino-acid chain: HTH-type transcriptional regulator BetI (195 aa).

The region spanning 8–68 (EIRRAQLIDA…ATMRHVLRDL (61 aa)) is the HTH tetR-type domain. Positions 31–50 (TLASVAQRANISTGIVSHYF) form a DNA-binding region, H-T-H motif.

It functions in the pathway amine and polyamine biosynthesis; betaine biosynthesis via choline pathway [regulation]. Repressor involved in the biosynthesis of the osmoprotectant glycine betaine. It represses transcription of the choline transporter BetT and the genes of BetAB involved in the synthesis of glycine betaine. The protein is HTH-type transcriptional regulator BetI of Burkholderia mallei (strain NCTC 10247).